Consider the following 358-residue polypeptide: Biotin synthase (358 aa).

The Radical SAM core domain occupies N50 to R277. [4Fe-4S] cluster is bound by residues C65, C69, and C72. C109, C140, C200, and R272 together coordinate [2Fe-2S] cluster.

This sequence belongs to the radical SAM superfamily. Biotin synthase family. As to quaternary structure, homodimer. It depends on [4Fe-4S] cluster as a cofactor. [2Fe-2S] cluster serves as cofactor.

The enzyme catalyses (4R,5S)-dethiobiotin + (sulfur carrier)-SH + 2 reduced [2Fe-2S]-[ferredoxin] + 2 S-adenosyl-L-methionine = (sulfur carrier)-H + biotin + 2 5'-deoxyadenosine + 2 L-methionine + 2 oxidized [2Fe-2S]-[ferredoxin]. Its pathway is cofactor biosynthesis; biotin biosynthesis; biotin from 7,8-diaminononanoate: step 2/2. Its function is as follows. Catalyzes the conversion of dethiobiotin (DTB) to biotin by the insertion of a sulfur atom into dethiobiotin via a radical-based mechanism. The polypeptide is Biotin synthase (Cellvibrio japonicus (strain Ueda107) (Pseudomonas fluorescens subsp. cellulosa)).